Consider the following 138-residue polypeptide: Basic phospholipase A2 homolog promutoxin (138 aa).

Residues 1–16 (MRTLWIMAVLLLGVEG) form the signal peptide. 7 disulfides stabilise this stretch: cysteine 42-cysteine 132, cysteine 44-cysteine 60, cysteine 59-cysteine 112, cysteine 65-cysteine 138, cysteine 66-cysteine 105, cysteine 73-cysteine 98, and cysteine 91-cysteine 103. The tract at residues 122–133 (KKHRVTMKFLCK) is important for membrane-damaging activities in eukaryotes and bacteria; heparin-binding.

The protein belongs to the phospholipase A2 family. Group II subfamily. R49 sub-subfamily. In terms of assembly, homodimer; non-covalently linked. As to expression, expressed by the venom gland.

It localises to the secreted. Snake venom phospholipase A2 homolog that lacks enzymatic activity. Exhibits potent myotoxicity causing myonecrosis and edema in the gastrocnemius muscle of mice. Is also able to stimulate the release of IL12 (IL12A-IL12B), TNF-alpha (TNF), IL6 and IL1-beta (IL1B) from human monocytes, and induce IL2, TNFalpha and IL6 release from T-cells. A model of myotoxic mechanism has been proposed: an apo Lys49-PLA2 is activated by the entrance of a hydrophobic molecule (e.g. fatty acid) at the hydrophobic channel of the protein leading to a reorientation of a monomer. This reorientation causes a transition between 'inactive' to 'active' states, causing alignment of C-terminal and membrane-docking sites (MDoS) side-by-side and putting the membrane-disruption sites (MDiS) in the same plane, exposed to solvent and in a symmetric position for both monomers. The MDoS region stabilizes the toxin on membrane by the interaction of charged residues with phospholipid head groups. Subsequently, the MDiS region destabilizes the membrane with penetration of hydrophobic residues. This insertion causes a disorganization of the membrane, allowing an uncontrolled influx of ions (i.e. calcium and sodium), and eventually triggering irreversible intracellular alterations and cell death. In Protobothrops mucrosquamatus (Taiwan habu), this protein is Basic phospholipase A2 homolog promutoxin.